The primary structure comprises 501 residues: Glycerol kinase (501 aa).

ADP is bound at residue threonine 17. ATP contacts are provided by threonine 17, threonine 18, and serine 19. Threonine 17 lines the sn-glycerol 3-phosphate pocket. Position 21 (arginine 21) interacts with ADP. Sn-glycerol 3-phosphate is bound by residues arginine 87, glutamate 88, tyrosine 139, and aspartate 243. Residues arginine 87, glutamate 88, tyrosine 139, aspartate 243, and glutamine 244 each contribute to the glycerol site. 2 residues coordinate ADP: threonine 265 and glycine 308. Residues threonine 265, glycine 308, glutamine 312, and glycine 409 each contribute to the ATP site. ADP is bound by residues glycine 409 and asparagine 413.

It belongs to the FGGY kinase family.

It carries out the reaction glycerol + ATP = sn-glycerol 3-phosphate + ADP + H(+). The protein operates within polyol metabolism; glycerol degradation via glycerol kinase pathway; sn-glycerol 3-phosphate from glycerol: step 1/1. Inhibited by fructose 1,6-bisphosphate (FBP). In terms of biological role, key enzyme in the regulation of glycerol uptake and metabolism. Catalyzes the phosphorylation of glycerol to yield sn-glycerol 3-phosphate. This chain is Glycerol kinase, found in Pseudomonas fluorescens (strain ATCC BAA-477 / NRRL B-23932 / Pf-5).